Consider the following 435-residue polypeptide: Trigger factor (435 aa).

The PPIase FKBP-type domain maps to 161 to 246 (DDQVTLDFEG…LTKVEEQILP (86 aa)).

This sequence belongs to the FKBP-type PPIase family. Tig subfamily.

The protein resides in the cytoplasm. The catalysed reaction is [protein]-peptidylproline (omega=180) = [protein]-peptidylproline (omega=0). Its function is as follows. Involved in protein export. Acts as a chaperone by maintaining the newly synthesized protein in an open conformation. Functions as a peptidyl-prolyl cis-trans isomerase. The polypeptide is Trigger factor (Psychromonas ingrahamii (strain DSM 17664 / CCUG 51855 / 37)).